The primary structure comprises 251 residues: Small ribosomal subunit protein uS3 (251 aa).

The 73-residue stretch at 39 to 111 (IRELINNFSK…DVDLNILEVK (73 aa)) folds into the KH type-2 domain.

It belongs to the universal ribosomal protein uS3 family. In terms of assembly, part of the 30S ribosomal subunit. Forms a tight complex with proteins S10 and S14.

Its function is as follows. Binds the lower part of the 30S subunit head. Binds mRNA in the 70S ribosome, positioning it for translation. The protein is Small ribosomal subunit protein uS3 of Phytoplasma sp. (strain STRAWB1).